Here is a 301-residue protein sequence, read N- to C-terminus: Zinc finger protein 346 (301 aa).

Matrin-type zinc fingers lie at residues 55–85 (SQCK…KVRR) and 117–141 (KACS…GKVH). Zn(2+) is bound by residues cysteine 57, cysteine 60, histidine 73, histidine 79, cysteine 119, cysteine 122, histidine 135, and histidine 141. Positions 151–177 (GSQTPALPQPEAQAKKDDGMQGPAEQD) are disordered. 2 Matrin-type zinc fingers span residues 180–210 (RFCS…HMNK) and 230–257 (YPCT…HKNH). Residues 250–283 (SGSKHKNHAKPKKGPNAFAPPPDNYQPDYQYPTN) form a disordered region. A compositionally biased stretch (basic residues) spans 251 to 262 (GSKHKNHAKPKK).

The protein localises to the nucleus. It is found in the cytoplasm. Binds preferentially to dsRNA, but also to RNA-DNA hybrids. The chain is Zinc finger protein 346 from Danio rerio (Zebrafish).